Consider the following 234-residue polypeptide: Triosephosphate isomerase (234 aa).

8–10 (NFK) is a substrate binding site. The active-site Electrophile is His90. The active-site Proton acceptor is the Glu159. Substrate-binding residues include Gly165 and Ser197.

It belongs to the triosephosphate isomerase family. Homodimer.

It is found in the cytoplasm. It catalyses the reaction D-glyceraldehyde 3-phosphate = dihydroxyacetone phosphate. It participates in carbohydrate biosynthesis; gluconeogenesis. It functions in the pathway carbohydrate degradation; glycolysis; D-glyceraldehyde 3-phosphate from glycerone phosphate: step 1/1. Its function is as follows. Involved in the gluconeogenesis. Catalyzes stereospecifically the conversion of dihydroxyacetone phosphate (DHAP) to D-glyceraldehyde-3-phosphate (G3P). The sequence is that of Triosephosphate isomerase from Helicobacter acinonychis (strain Sheeba).